The chain runs to 394 residues: Junctional adhesion molecule-like (394 aa).

The signal sequence occupies residues Met1–Gly19. Ig-like V-type domains follow at residues Leu20–Val132 and Pro137–His250. The Extracellular segment spans residues Leu20–Leu275. 2 cysteine pairs are disulfide-bonded: Cys42-Cys116 and Cys155-Cys234. N-linked (GlcNAc...) asparagine glycans are attached at residues Asn76 and Asn231. The chain crosses the membrane as a helical span at residues Val276–Val296. Residues Lys297 to Phe394 lie on the Cytoplasmic side of the membrane. Positions Pro369–Phe394 are disordered. The span at Arg372–Ser383 shows a compositional bias: basic and acidic residues.

Belongs to the immunoglobulin superfamily. In terms of assembly, homodimer; active form in leukocyte-endothelial cell adhesion. Interacts (homodimeric form) with CXADR. Interacts (via cytoplasmic domain) with the PI3 kinase; upon CXADR-binding. Interacts with ITGA4 and ITGB1; integrin alpha-4/beta-1 may regulate leukocyte to endothelial cells adhesion by controlling JAML homodimerization. As to expression, expression is restricted to the hematopoietic tissues with the exception of liver. Expressed in fetal liver, spleen and thymus. Preferentially expressed by mature leukocytes (at protein level).

Its subcellular location is the cell membrane. The protein localises to the cell junction. Transmembrane protein of the plasma membrane of leukocytes that control their migration and activation through interaction with CXADR, a plasma membrane receptor found on adjacent epithelial and endothelial cells. The interaction between both receptors mediates the activation of gamma-delta T-cells, a subpopulation of T-cells residing in epithelia and involved in tissue homeostasis and repair. Upon epithelial CXADR-binding, JAML induces downstream cell signaling events in gamma-delta T-cells through PI3-kinase and MAP kinases. It results in proliferation and production of cytokines and growth factors by T-cells that in turn stimulate epithelial tissues repair. It also controls the transmigration of leukocytes within epithelial and endothelial tissues through adhesive interactions with epithelial and endothelial CXADR. The protein is Junctional adhesion molecule-like of Homo sapiens (Human).